The chain runs to 1176 residues: Histidine kinase 2 (1176 aa).

Topologically, residues 1–29 (MSITCELLNLTSKKAKKSSSSDKKWLKKP) are cytoplasmic. A helical membrane pass occupies residues 30 to 50 (LFFLILCGSLVIVLVMFLRLG). The Extracellular portion of the chain corresponds to 51–174 (RSQKEETDSC…LEQGLSSYLR (124 aa)). Residues 175–195 (NAWWCLILGVLVCHKIYVSHS) form a helical membrane-spanning segment. Over 196–232 (KARGERKEKVHLQEALAPKKQQQRAQTSSRGAGRWRK) the chain is Cytoplasmic. Residues 233-253 (NILLLGILGGVSFSVWWFWDT) form a helical membrane-spanning segment. The Extracellular portion of the chain corresponds to 254-536 (NEEIIMKRRE…CRFKHKLPIP (283 aa)). The 225-residue stretch at 302 to 526 (IPSAIDQRTF…GDPSRNHEMH (225 aa)) folds into the CHASE domain. The helical transmembrane segment at 537–557 (WTAITPSILVLVITFLVGYIL) threads the bilayer. The Cytoplasmic portion of the chain corresponds to 558-1176 (YEAINRIATV…TAVARFFEPC (619 aa)). The region spanning 594-867 (TVSHEIRTPM…TFSFTGVFGK (274 aa)) is the Histidine kinase domain. Residue His597 is modified to Phosphohistidine; by autocatalysis. Response regulatory domains lie at 891–1013 (RALV…QETL) and 1036–1173 (QILV…ARFF). 4-aspartylphosphate occurs at positions 942 and 1086.

In terms of assembly, self-interacts. Interacts with AHK3, AHP1, AHP2, AHP3, AHP5, ATAF2, AT2S3, BETAA-AD, CYP20-2, DRP1A, HIR1, HIR2, PI4KB1, PI4KG5 and At4g12060. Autophosphorylated predominantly on His residues. Activation probably requires a transfer of a phosphate group between a His in the transmitter domain and an Asp of the receiver domain. Expressed in roots, leaves and flowers, mostly in the vascular tissues. Present in seedlings.

It is found in the endoplasmic reticulum membrane. It carries out the reaction ATP + protein L-histidine = ADP + protein N-phospho-L-histidine.. With respect to regulation, activated by cytokinins to initiate phosphorelay signaling. Cytokinins (CK) receptor related to bacterial two-component regulators. Functions as a histidine kinase and transmits the stress signal to a downstream MAPK cascade. This protein undergoes an ATP-dependent autophosphorylation at a conserved histidine residue in the kinase core, and a phosphoryl group is then transferred to a conserved aspartate residue in the receiver domain. In the presence of cytokinin, feeds phosphate to phosphorelay-integrating histidine phosphotransfer protein (HPt) and activates subsequent cascade. Involved in meristems establishment in seedlings. Redundant negative regulator of drought and salt stress responses and abscisic acid (ABA) signaling. Together with AHK3, plays a negative regulatory role in cold stress signaling via inhibition of ABA response, occurring independently of the cold acclimation pathway. Redundant positive regulator of cytokinin signaling that regulates many developmental processes including seed germination, cell division, seed size, chlorophyll retention during leaf senescence, root repression and shoot promotion. Involved in alkamides (e.g. N-isobutyl decanamide) and N-acylethanolamides (NAE) signaling that control meristematic activity and differentiation processes during plant development. Contributes to vascular bundle formation and secondary growth in a cytokinin-dependent manner, probably by promoting the maintenance of mitotic activity and/or identity of procambial cells. Together with AHK4, required for growth and reproduction promotion stimulated by the endophytic fungus Piriformospora indica in a trans-zeatin-dependent manner. Required by the cytokinin-dependent flower development regulation pathway. The polypeptide is Histidine kinase 2 (AHK2) (Arabidopsis thaliana (Mouse-ear cress)).